We begin with the raw amino-acid sequence, 297 residues long: Transmembrane protein 178A (297 aa).

The signal sequence occupies residues 1–25 (MEPRALVTALSLGLSLCSLGLLVTA). Topologically, residues 26-179 (IFTDHWYETD…LLHLRRITAG (154 aa)) are extracellular. Residues 41–57 (ESCERSRAGADPPDQKN) show a composition bias toward basic and acidic residues. Residues 41–84 (ESCERSRAGADPPDQKNRLMPLSHLPLRDSPPLGRRLLPGGPGR) are disordered. Low complexity predominate over residues 68–79 (RDSPPLGRRLLP). N158 is a glycosylation site (N-linked (GlcNAc...) asparagine). A helical membrane pass occupies residues 180-200 (FLGMAVAVLLCGCIVATVSFF). Topologically, residues 201-208 (WEESLTQH) are cytoplasmic. Residues 209–229 (VAGLLFLMTGIFCTISLCTYA) traverse the membrane as a helical segment. The Extracellular portion of the chain corresponds to 230-257 (ASISYDLNRLPKLIYSLPADVEHGYSWS). The helical transmembrane segment at 258-278 (IFCAWCSLGFIVAAGGLCIAY) threads the bilayer. The Cytoplasmic segment spans residues 279–297 (PFISRTKIAQLKSGRDSTV).

Belongs to the TMEM178 family. As to quaternary structure, interacts with STIM1.

Its subcellular location is the endoplasmic reticulum membrane. Its function is as follows. Acts as a negative regulator of osteoclast differentiation in basal and inflammatory conditions by regulating TNFSF11-induced Ca (2+) fluxes, thereby controlling the induction of NFATC1. The sequence is that of Transmembrane protein 178A (TMEM178A) from Homo sapiens (Human).